The sequence spans 28 residues: RSCPRIWMECTRDSDCMAKCICVAGHCG.

3 disulfide bridges follow: C3–C20, C10–C22, and C16–C27.

Belongs to the protease inhibitor I7 (squash-type serine protease inhibitor) family.

The protein resides in the secreted. In terms of biological role, inhibits trypsin. In Momordica charantia (Bitter gourd), this protein is Trypsin inhibitor A.